Here is a 221-residue protein sequence, read N- to C-terminus: 7-cyano-7-deazaguanine synthase (221 aa).

8-18 (LSGGMDSAAVI) contacts ATP. Zn(2+) is bound by residues Cys186, Cys196, Cys199, and Cys202.

Belongs to the QueC family. Requires Zn(2+) as cofactor.

The catalysed reaction is 7-carboxy-7-deazaguanine + NH4(+) + ATP = 7-cyano-7-deazaguanine + ADP + phosphate + H2O + H(+). It participates in purine metabolism; 7-cyano-7-deazaguanine biosynthesis. In terms of biological role, catalyzes the ATP-dependent conversion of 7-carboxy-7-deazaguanine (CDG) to 7-cyano-7-deazaguanine (preQ(0)). This Stenotrophomonas maltophilia (strain K279a) protein is 7-cyano-7-deazaguanine synthase.